The following is a 131-amino-acid chain: Small ribosomal subunit protein uS8 (131 aa).

Belongs to the universal ribosomal protein uS8 family. Part of the 30S ribosomal subunit. Contacts proteins S5 and S12.

Its function is as follows. One of the primary rRNA binding proteins, it binds directly to 16S rRNA central domain where it helps coordinate assembly of the platform of the 30S subunit. The polypeptide is Small ribosomal subunit protein uS8 (Chlorobium luteolum (strain DSM 273 / BCRC 81028 / 2530) (Pelodictyon luteolum)).